The primary structure comprises 328 residues: Serine protease 27 (328 aa).

The first 22 residues, 1-22 (MRQPHITALLLLPLLLRSGTEG), serve as a signal peptide directing secretion. A propeptide spans 23–37 (AEAMRACGHPRMFNR) (activation peptide). A Peptidase S1 domain is found at 38-280 (MVGGEDALEG…HYQWIHQIIP (243 aa)). Cysteine 63 and cysteine 79 are joined by a disulfide. The active-site Charge relay system is histidine 78. A glycan (N-linked (GlcNAc...) asparagine) is linked at asparagine 82. Catalysis depends on aspartate 127, which acts as the Charge relay system. 3 cysteine pairs are disulfide-bonded: cysteine 161–cysteine 238, cysteine 194–cysteine 217, and cysteine 228–cysteine 256. Serine 232 acts as the Charge relay system in catalysis.

The protein belongs to the peptidase S1 family.

It localises to the secreted. This chain is Serine protease 27 (Prss27), found in Rattus norvegicus (Rat).